Here is a 36-residue protein sequence, read N- to C-terminus: Kappa-isophellitoxin-Tst1a (36 aa).

Residues 2 to 36 form the ShKT domain; it reads CENNFSDRECERRKKDCDSSMKFRELSCPKTCGTC. Cystine bridges form between cysteine 2/cysteine 36, cysteine 11/cysteine 29, and cysteine 18/cysteine 33.

This sequence belongs to the sea anemone type 1 potassium channel toxin family. Type 1a subfamily. In terms of tissue distribution, predominantly expressed in mesenterial filaments (at protein level), a morphological structure that has a functional role in prey killing and digestion. Also expressed in club-tips, tentacles, actinopharynx, body column, mesenterial filaments and pedal disk.

It is found in the secreted. The protein localises to the nematocyst. Its function is as follows. Probable toxin with unknown function. Does not inhibit all channels tested. Is not cytotoxic on macrophage. The polypeptide is Kappa-isophellitoxin-Tst1a (Telmatactis stephensoni (Sea anemone)).